Consider the following 311-residue polypeptide: Lipoyl synthase (311 aa).

Residues C47, C52, C58, C73, C77, C80, and S286 each coordinate [4Fe-4S] cluster. A Radical SAM core domain is found at 59-276 (WSRHTATYLA…RSVGESLGLF (218 aa)).

Belongs to the radical SAM superfamily. Lipoyl synthase family. Requires [4Fe-4S] cluster as cofactor.

The protein localises to the cytoplasm. It catalyses the reaction [[Fe-S] cluster scaffold protein carrying a second [4Fe-4S](2+) cluster] + N(6)-octanoyl-L-lysyl-[protein] + 2 oxidized [2Fe-2S]-[ferredoxin] + 2 S-adenosyl-L-methionine + 4 H(+) = [[Fe-S] cluster scaffold protein] + N(6)-[(R)-dihydrolipoyl]-L-lysyl-[protein] + 4 Fe(3+) + 2 hydrogen sulfide + 2 5'-deoxyadenosine + 2 L-methionine + 2 reduced [2Fe-2S]-[ferredoxin]. The protein operates within protein modification; protein lipoylation via endogenous pathway; protein N(6)-(lipoyl)lysine from octanoyl-[acyl-carrier-protein]: step 2/2. Functionally, catalyzes the radical-mediated insertion of two sulfur atoms into the C-6 and C-8 positions of the octanoyl moiety bound to the lipoyl domains of lipoate-dependent enzymes, thereby converting the octanoylated domains into lipoylated derivatives. In Chlamydia trachomatis serovar L2 (strain ATCC VR-902B / DSM 19102 / 434/Bu), this protein is Lipoyl synthase.